The sequence spans 583 residues: Chromosomal replication initiator protein DnaA (583 aa).

The interval 1–91 is domain I, interacts with DnaA modulators; that stretch reads MSNSNFSIEE…KHVLKTRLDL (91 aa). The interval 91–241 is domain II; it reads LSVSLAITST…SFNDGLDGES (151 aa). The interval 151–239 is disordered; that stretch reads KAEQRDGASQ…SSSFNDGLDG (89 aa). Positions 172-182 are enriched in basic and acidic residues; the sequence is EAARRREHDAD. The interval 242-458 is domain III, AAA+ region; sequence LLNKNYTFEN…GALIRVTAYC (217 aa). 4 residues coordinate ATP: G286, G288, K289, and T290. Positions 459–583 are domain IV, binds dsDNA; the sequence is ALSHEPLTVE…TQKIKSHARD (125 aa).

It belongs to the DnaA family. In terms of assembly, oligomerizes as a right-handed, spiral filament on DNA at oriC.

The protein resides in the cytoplasm. In terms of biological role, plays an essential role in the initiation and regulation of chromosomal replication. ATP-DnaA binds to the origin of replication (oriC) to initiate formation of the DNA replication initiation complex once per cell cycle. Binds the DnaA box (a 9 base pair repeat at the origin) and separates the double-stranded (ds)DNA. Forms a right-handed helical filament on oriC DNA; dsDNA binds to the exterior of the filament while single-stranded (ss)DNA is stabiized in the filament's interior. The ATP-DnaA-oriC complex binds and stabilizes one strand of the AT-rich DNA unwinding element (DUE), permitting loading of DNA polymerase. After initiation quickly degrades to an ADP-DnaA complex that is not apt for DNA replication. Binds acidic phospholipids. The polypeptide is Chromosomal replication initiator protein DnaA (Corynebacterium jeikeium (strain K411)).